Reading from the N-terminus, the 134-residue chain is ATP synthase epsilon chain (134 aa).

This sequence belongs to the ATPase epsilon chain family. F-type ATPases have 2 components, CF(1) - the catalytic core - and CF(0) - the membrane proton channel. CF(1) has five subunits: alpha(3), beta(3), gamma(1), delta(1), epsilon(1). CF(0) has three main subunits: a, b and c.

It localises to the cell inner membrane. Functionally, produces ATP from ADP in the presence of a proton gradient across the membrane. This is ATP synthase epsilon chain from Nitratidesulfovibrio vulgaris (strain DSM 19637 / Miyazaki F) (Desulfovibrio vulgaris).